Here is a 102-residue protein sequence, read N- to C-terminus: Small ribosomal subunit protein uS10 (102 aa).

The protein belongs to the universal ribosomal protein uS10 family. As to quaternary structure, part of the 30S ribosomal subunit.

Functionally, involved in the binding of tRNA to the ribosomes. In Methanococcus maripaludis (strain C5 / ATCC BAA-1333), this protein is Small ribosomal subunit protein uS10.